Reading from the N-terminus, the 392-residue chain is Protein RecA (392 aa).

The tract at residues 1–21 (MALETKPAQDPATEIKHELDP) is disordered. Position 83–90 (83–90 (GPESSGKT)) interacts with ATP. The segment at 372–392 (DAAKDTKATAAPAAKSSRAKA) is disordered. Over residues 379 to 392 (ATAAPAAKSSRAKA) the composition is skewed to low complexity.

It belongs to the RecA family.

It is found in the cytoplasm. Functionally, can catalyze the hydrolysis of ATP in the presence of single-stranded DNA, the ATP-dependent uptake of single-stranded DNA by duplex DNA, and the ATP-dependent hybridization of homologous single-stranded DNAs. It interacts with LexA causing its activation and leading to its autocatalytic cleavage. The sequence is that of Protein RecA from Bifidobacterium breve.